We begin with the raw amino-acid sequence, 188 residues long: Putative manganese efflux pump MntP (188 aa).

Helical transmembrane passes span Leu3–Ala23, Ile35–Val55, Phe63–Met83, Trp104–Phe126, Met140–Phe160, and Ala167–Ile187.

It belongs to the MntP (TC 9.B.29) family.

The protein resides in the cell inner membrane. Its function is as follows. Probably functions as a manganese efflux pump. In Neisseria gonorrhoeae (strain ATCC 700825 / FA 1090), this protein is Putative manganese efflux pump MntP.